Here is a 32-residue protein sequence, read N- to C-terminus: Cytochrome b6-f complex subunit 7 (32 aa).

Residues alanine 9–leucine 27 traverse the membrane as a helical segment.

It belongs to the PetM family. The 4 large subunits of the cytochrome b6-f complex are cytochrome b6, subunit IV (17 kDa polypeptide, PetD), cytochrome f and the Rieske protein, while the 4 small subunits are PetG, PetL, PetM and PetN. The complex functions as a dimer.

It localises to the cellular thylakoid membrane. Functionally, component of the cytochrome b6-f complex, which mediates electron transfer between photosystem II (PSII) and photosystem I (PSI), cyclic electron flow around PSI, and state transitions. In Prochlorococcus marinus (strain MIT 9211), this protein is Cytochrome b6-f complex subunit 7.